The chain runs to 306 residues: Palmitoyl-protein thioesterase ABHD10, mitochondrial (306 aa).

A mitochondrion-targeting transit peptide spans 1–52 (MAVARLAAVAAWVPCRSWGCAAVPFGPHRGLSALLARIPQRAPRWLPACRQK). The AB hydrolase-1 domain occupies 78–177 (IIFIPGYLSY…KVVALLGVAT (100 aa)). Active-site charge relay system residues include S152, D249, and H279.

The protein belongs to the AB hydrolase superfamily.

The protein resides in the mitochondrion. It catalyses the reaction S-hexadecanoyl-L-cysteinyl-[protein] + H2O = L-cysteinyl-[protein] + hexadecanoate + H(+). It carries out the reaction mycophenolic acid O-acyl-beta-D-glucuronide + H2O = mycophenolate + D-glucuronate + H(+). With respect to regulation, inhibited by palmostatin-B. Functionally, acts as an acyl-protein thioesterase that hydrolyzes fatty acids from acylated residues in proteins. Regulates the mitochondrial S-depalmitoylation of the nucleophilic active site residue of peroxiredoxin-5/PRDX5, a key antioxidant protein, therefore modulating mitochondrial antioxidant ability. Also catalyzes the deglucuronidation of mycophenolic acid acyl-glucuronide, an active metabolite of the immunosuppressant drug mycophenolate. This is Palmitoyl-protein thioesterase ABHD10, mitochondrial (ABHD10) from Pongo abelii (Sumatran orangutan).